A 568-amino-acid polypeptide reads, in one-letter code: 2-succinyl-5-enolpyruvyl-6-hydroxy-3-cyclohexene-1-carboxylate synthase (568 aa).

It belongs to the TPP enzyme family. MenD subfamily. As to quaternary structure, homodimer. Mg(2+) serves as cofactor. It depends on Mn(2+) as a cofactor. Requires thiamine diphosphate as cofactor.

The enzyme catalyses isochorismate + 2-oxoglutarate + H(+) = 5-enolpyruvoyl-6-hydroxy-2-succinyl-cyclohex-3-ene-1-carboxylate + CO2. The protein operates within quinol/quinone metabolism; 1,4-dihydroxy-2-naphthoate biosynthesis; 1,4-dihydroxy-2-naphthoate from chorismate: step 2/7. It functions in the pathway quinol/quinone metabolism; menaquinone biosynthesis. Catalyzes the thiamine diphosphate-dependent decarboxylation of 2-oxoglutarate and the subsequent addition of the resulting succinic semialdehyde-thiamine pyrophosphate anion to isochorismate to yield 2-succinyl-5-enolpyruvyl-6-hydroxy-3-cyclohexene-1-carboxylate (SEPHCHC). This chain is 2-succinyl-5-enolpyruvyl-6-hydroxy-3-cyclohexene-1-carboxylate synthase, found in Histophilus somni (strain 129Pt) (Haemophilus somnus).